The chain runs to 107 residues: UPF0145 protein YbjQ (107 aa).

Belongs to the UPF0145 family.

The chain is UPF0145 protein YbjQ from Shigella flexneri.